A 350-amino-acid polypeptide reads, in one-letter code: DNA polymerase IV (350 aa).

The region spanning 5–181 is the UmuC domain; it reads IMHYDMDAFY…KKIKIIPGVG (177 aa). 2 residues coordinate Mg(2+): D9 and D99. E100 is an active-site residue.

The protein belongs to the DNA polymerase type-Y family. As to quaternary structure, monomer. Mg(2+) is required as a cofactor.

The protein localises to the cytoplasm. It catalyses the reaction DNA(n) + a 2'-deoxyribonucleoside 5'-triphosphate = DNA(n+1) + diphosphate. Functionally, poorly processive, error-prone DNA polymerase involved in untargeted mutagenesis. Copies undamaged DNA at stalled replication forks, which arise in vivo from mismatched or misaligned primer ends. These misaligned primers can be extended by PolIV. Exhibits no 3'-5' exonuclease (proofreading) activity. May be involved in translesional synthesis, in conjunction with the beta clamp from PolIII. The sequence is that of DNA polymerase IV from Fusobacterium nucleatum subsp. nucleatum (strain ATCC 25586 / DSM 15643 / BCRC 10681 / CIP 101130 / JCM 8532 / KCTC 2640 / LMG 13131 / VPI 4355).